Here is a 312-residue protein sequence, read N- to C-terminus: DNA-directed RNA polymerase subunit alpha (312 aa).

Residues 1–226 (MIEFEKPNIT…EHFKVFMSTD (226 aa)) are alpha N-terminal domain (alpha-NTD). Residues 243–312 (NEKKLEMTIE…DLGLSLRQDD (70 aa)) form an alpha C-terminal domain (alpha-CTD) region.

This sequence belongs to the RNA polymerase alpha chain family. In terms of assembly, homodimer. The RNAP catalytic core consists of 2 alpha, 1 beta, 1 beta' and 1 omega subunit. When a sigma factor is associated with the core the holoenzyme is formed, which can initiate transcription.

It catalyses the reaction RNA(n) + a ribonucleoside 5'-triphosphate = RNA(n+1) + diphosphate. Functionally, DNA-dependent RNA polymerase catalyzes the transcription of DNA into RNA using the four ribonucleoside triphosphates as substrates. This chain is DNA-directed RNA polymerase subunit alpha, found in Lactobacillus johnsonii (strain CNCM I-12250 / La1 / NCC 533).